The following is a 1181-amino-acid chain: HEAT repeat-containing protein 6 (1181 aa).

The HEAT 1 repeat unit spans residues 159-198; that stretch reads PELLGNTGLLMKLSDLAQSDPEVRRAAVHCMANLCLSVPG. Disordered stretches follow at residues 292–347 and 371–390; these read QYDG…PVTG and LDGSGAAEKDGVSSSFSSSS. Positions 300–312 are enriched in polar residues; the sequence is KPQQSESSASRPT. Residues 313–325 show a composition bias toward basic residues; sequence LNKKKKSKVKPKK. Phosphoserine occurs at positions 336 and 337. Phosphoserine occurs at positions 399 and 402. HEAT repeat units lie at residues 452–490, 515–552, and 558–595; these read ELGSPQSVSLMTLTLKDPSPKTRACALQVLSAILEGSKQ, SIRELHRCLLLALVAESSSQTVTQIIKCLANLVSNAPY, and SLLTKVWNQIKPYIRHKDVNVRVSSLTLLGAIVSTHAP. The disordered stretch occupies residues 613–646; the sequence is NSNSATPHLSPPDWWKKAPAGPSLEETSVSSPKG. A Phosphothreonine modification is found at Thr618. Polar residues predominate over residues 637-646; it reads EETSVSSPKG. Position 643 is a phosphoserine (Ser643).

In terms of tissue distribution, amplified in breast cancer cell lines MCF-7 and BT-474.

Amplification-dependent oncogene. In Homo sapiens (Human), this protein is HEAT repeat-containing protein 6 (HEATR6).